We begin with the raw amino-acid sequence, 731 residues long: Putative pentatricopeptide repeat-containing protein At1g17630 (731 aa).

PPR repeat units lie at residues 88–118 (SGSLAANLISVYARLGLLLDARNVFETVSLV), 122–156 (DLRLWNSILKANVSHGLYENALELYRGMRQRGLTG), 157–191 (DGYILPLILRACRYLGRFGLCRAFHTQVIQIGLKE), 192–222 (NLHVVNELLTLYPKAGRMGDAYNLFVEMPVR), 223–257 (NRMSWNVMIKGFSQEYDCESAVKIFEWMQREEFKP), 258–292 (DEVTWTSVLSCHSQCGKFEDVLKYFHLMRMSGNAV), 293–327 (SGEALAVFFSVCAELEALSIAEKVHGYVIKGGFEE), 328–358 (YLPSRNALIHVYGKQGKVKDAEHLFRQIRNK), 359–393 (GIESWNSLITSFVDAGKLDEALSLFSELEEMNHVC), 398–432 (NVVTWTSVIKGCNVQGRGDDSLEYFRQMQFSKVLA), 433–467 (NSVTICCILSICAELPALNLGREIHGHVIRTSMSE), 468–498 (NILVQNALVNMYAKCGLLSEGSLVFEAIRDK), 499–533 (DLISWNSIIKGYGMHGFAEKALSMFDRMISSGFHP), 534–569 (DGIALVAVLSACSHAGLVEKGREIFYSMSKRFGLEP), and 570–600 (QQEHYACIVDLLGRVGFLKEASEIVKNMPME). The interval 605-680 (VLGALLNSCR…VSGSSWIEVK (76 aa)) is type E motif. Positions 681–711 (KKKYKFSSGSIVQSEFETIYPVLEDLVSHML) are type E(+) motif.

Belongs to the PPR family. PCMP-E subfamily.

The chain is Putative pentatricopeptide repeat-containing protein At1g17630 (PCMP-E72) from Arabidopsis thaliana (Mouse-ear cress).